Here is a 698-residue protein sequence, read N- to C-terminus: Interleukin-17 receptor C (698 aa).

Residues 1–21 form the signal peptide; it reads MPVSWFLLSLALGRNPVVVSL. The Extracellular portion of the chain corresponds to 22 to 464; that stretch reads ERLMEPQDTA…CPMDKYIHRR (443 aa). N182 carries an N-linked (GlcNAc...) asparagine glycan. An intrachain disulfide couples C190 to C202. N-linked (GlcNAc...) asparagine glycosylation is found at N209, N249, N255, and N259. Disulfide bonds link C266-C316, C268-C284, C325-C334, C364-C378, C406-C413, and C440-C455. Residues 465–485 form a helical membrane-spanning segment; sequence WVLVWLACLLLAAALFFFLLL. Topologically, residues 486-698 are cytoplasmic; sequence KKDRRKAARG…WDLGPCTTLE (213 aa). Positions 496 to 645 constitute an SEFIR domain; that stretch reads SRTALLLHSA…LPSQLPAFLD (150 aa).

In terms of assembly, homodimer; disulfide-linked. Heterodimer with IL17RA. Heterodimerization with IL17RA is independent of the cytoplasmic tail. Associates with non-glycosylated IL17RA constitutively. Binding of IL17A and IL17F induces association with glycosylated IL17RA. Forms complexes with 2:1 binding stoichiometry: two receptor chains for one interleukin molecule. IL17A homodimer preferentially drives the formation of IL17RA-IL17RC heterodimeric receptor complex, whereas IL17F homodimer forms predominantly complexes with IL17RC homodimer. IL17A-IL17F forms complexes with IL17RA-IL17RC, but with lower affinity when compared to IL17A homodimer. IL17RC chain cannot distinguish between IL17A and IL17F molecules, potentially enabling the formation of topologically distinct complexes. Interacts (through SEFIR domain and extended downstream region) with TRAF3IP2/ACT1 (phosphorylated). As to expression, highly expressed in colonic epithelial cells. Expressed in lung epithelial cells. Expressed in macrophages. Highly expressed in B-1a B cells and at a lower extent in B-1b and B-2 B cells (at protein level).

It is found in the cell membrane. In terms of biological role, receptor for IL17A and IL17F, major effector cytokines of innate and adaptive immune system involved in antimicrobial host defense and maintenance of tissue integrity. Receptor for IL17A and IL17F homodimers as part of a heterodimeric complex with IL17RA. Receptor for the heterodimer formed by IL17A and IL17B as part of a heterodimeric complex with IL17RA. Has also been shown to be the cognate receptor for IL17F and to bind IL17A with high affinity without the need for IL17RA. Upon binding of IL17F homodimer triggers downstream activation of TRAF6 and NF-kappa-B signaling pathway. Induces transcriptional activation of IL33, a potent cytokine that stimulates group 2 innate lymphoid cells and adaptive T-helper 2 cells involved in pulmonary allergic response to fungi. Promotes sympathetic innervation of peripheral organs by coordinating the communication between gamma-delta T cells and parenchymal cells. Stimulates sympathetic innervation of thermogenic adipose tissue by driving TGFB1 expression. Binding of IL17A-IL17F to IL17RA-IL17RC heterodimeric receptor complex triggers homotypic interaction of IL17RA and IL17RC chains with TRAF3IP2 adapter through SEFIR domains. This leads to downstream TRAF6-mediated activation of NF-kappa-B and MAPkinase pathways ultimately resulting in transcriptional activation of cytokines, chemokines, antimicrobial peptides and matrix metalloproteinases, with potential strong immune inflammation. Primarily induces neutrophil activation and recruitment at infection and inflammatory sites. Stimulates the production of antimicrobial beta-defensins DEFB1, DEFB103A, and DEFB104A by mucosal epithelial cells, limiting the entry of microbes through the epithelial barriers. In Mus musculus (Mouse), this protein is Interleukin-17 receptor C (Il17rc).